The primary structure comprises 272 residues: Sulfate transporter CysZ (272 aa).

The next 4 helical transmembrane spans lie at 29–49 (FVIIPILLNTILLCGLFWLFI), 66–86 (WLSFLSVILLTLSILTILLLF), 148–168 (IIALFLLSFIPLVGQTIVPVL), and 219–239 (FVPVINLLIMPVAVCGATLMW).

It belongs to the CysZ family.

It localises to the cell inner membrane. Functionally, high affinity, high specificity proton-dependent sulfate transporter, which mediates sulfate uptake. Provides the sulfur source for the cysteine synthesis pathway. In Haemophilus influenzae (strain 86-028NP), this protein is Sulfate transporter CysZ.